Consider the following 354-residue polypeptide: Methylthioribose-1-phosphate isomerase (354 aa).

Substrate is bound by residues 58-60 (RGA), R101, and Q204. D245 (proton donor) is an active-site residue. 255–256 (NK) lines the substrate pocket.

Belongs to the eIF-2B alpha/beta/delta subunits family. MtnA subfamily.

It catalyses the reaction 5-(methylsulfanyl)-alpha-D-ribose 1-phosphate = 5-(methylsulfanyl)-D-ribulose 1-phosphate. Its pathway is amino-acid biosynthesis; L-methionine biosynthesis via salvage pathway; L-methionine from S-methyl-5-thio-alpha-D-ribose 1-phosphate: step 1/6. Its function is as follows. Catalyzes the interconversion of methylthioribose-1-phosphate (MTR-1-P) into methylthioribulose-1-phosphate (MTRu-1-P). The polypeptide is Methylthioribose-1-phosphate isomerase (Xylella fastidiosa (strain M23)).